We begin with the raw amino-acid sequence, 336 residues long: Myb family transcription factor PHL8 (336 aa).

One can recognise an HTH myb-type domain in the interval 31 to 91 (TDAKPRLKWT…HLQKYRLGKS (61 aa)). Residues 62–87 (PKGLMKVMEIPGLTLYHLKSHLQKYR) constitute a DNA-binding region (H-T-H motif). The segment at 100 to 134 (EVSSASENQEVESKNDSRDLRGCSVTEENSNPAKE) is disordered. Positions 110–120 (VESKNDSRDLR) are enriched in basic and acidic residues. A coiled-coil region spans residues 139–159 (TEALQMQMEVQKKLHEQIEVQ). The LHEQLE motif lies at 152–157 (LHEQIE).

It belongs to the MYB-CC family.

It is found in the nucleus. The polypeptide is Myb family transcription factor PHL8 (Arabidopsis thaliana (Mouse-ear cress)).